The chain runs to 96 residues: Probable RNA-binding protein YqeI (96 aa).

A CRM domain is found at 1 to 96 (MLTGKQKRFL…SKENKQIELP (96 aa)).

This chain is Probable RNA-binding protein YqeI (yqeI), found in Bacillus subtilis (strain 168).